Reading from the N-terminus, the 280-residue chain is Ribosomal RNA-processing protein 7 homolog A (280 aa).

An RRM domain is found at Arg-59 to Tyr-159. Phosphoserine is present on Ser-99.

The protein belongs to the RRP7 family. Part of the small subunit (SSU) processome, composed of more than 70 proteins and the RNA chaperone small nucleolar RNA (snoRNA) U3. Interacts with NOL6; required for NOL6 localization to nucleolus.

The protein resides in the nucleus. It localises to the nucleolus. The protein localises to the cell projection. It is found in the cilium. Its subcellular location is the cytoplasm. The protein resides in the cytoskeleton. It localises to the microtubule organizing center. The protein localises to the centrosome. In terms of biological role, nucleolar protein that is involved in ribosomal RNA (rRNA) processing. Also plays a role in primary cilia resorption, and cell cycle progression in neurogenesis and neocortex development. Part of the small subunit (SSU) processome, first precursor of the small eukaryotic ribosomal subunit. During the assembly of the SSU processome in the nucleolus, many ribosome biogenesis factors, an RNA chaperone and ribosomal proteins associate with the nascent pre-rRNA and work in concert to generate RNA folding, modifications, rearrangements and cleavage as well as targeted degradation of pre-ribosomal RNA by the RNA exosome. The polypeptide is Ribosomal RNA-processing protein 7 homolog A (RRP7A) (Pongo abelii (Sumatran orangutan)).